The sequence spans 557 residues: Potassium-transporting ATPase potassium-binding subunit (557 aa).

A run of 12 helical transmembrane segments spans residues 5–25 (GFLLIATFLLVLMVLARPLGS), 63–83 (LCAILGLNMLGLAVLFFMLLG), 132–152 (GLTVQNFLSAASGIAVIFALI), 170–190 (LLRITLWVLVPVALLIALFFI), 253–273 (FVQMLAIFLIPTALCFAFGEV), 283–303 (LLWAMSVIFVICVGVVMWAEV), 329–349 (VLVSSLFAVVTTAASCGAVIA), 356–376 (ALGGMVPMWLMQIGEVVFGGV), 379–399 (GLYGMMLFVLLAVFIAGLMIG), 416–436 (LTALAILVTPTLVLMGAALAM), 484–504 (LLAFCMFVGRFGVIIPVMAIA), and 526–546 (LFVGLLIGTVLLVGALTFIPA).

It belongs to the KdpA family. The system is composed of three essential subunits: KdpA, KdpB and KdpC.

The protein localises to the cell inner membrane. Functionally, part of the high-affinity ATP-driven potassium transport (or Kdp) system, which catalyzes the hydrolysis of ATP coupled with the electrogenic transport of potassium into the cytoplasm. This subunit binds the periplasmic potassium ions and delivers the ions to the membrane domain of KdpB through an intramembrane tunnel. The chain is Potassium-transporting ATPase potassium-binding subunit from Escherichia coli O9:H4 (strain HS).